A 63-amino-acid polypeptide reads, in one-letter code: MGTPIKKISTVIIKMVSSANTGYFYRTTKSALLSTKKLLLRKYDPVIRQHVLFKEEKISRKKN.

Belongs to the bacterial ribosomal protein bL33 family.

The protein localises to the mitochondrion. The sequence is that of Large ribosomal subunit protein bL33m (mrpl33) from Dictyostelium discoideum (Social amoeba).